Reading from the N-terminus, the 55-residue chain is Photosystem II reaction center protein K (55 aa).

A propeptide spanning residues 1–18 (MFYIHLENTFDLSSTILV) is cleaved from the precursor. Residues 26–46 (IFDPIVDVMPIIPLFFFLLAF) form a helical membrane-spanning segment.

It belongs to the PsbK family. In terms of assembly, PSII is composed of 1 copy each of membrane proteins PsbA, PsbB, PsbC, PsbD, PsbE, PsbF, PsbH, PsbI, PsbJ, PsbK, PsbL, PsbM, PsbT, PsbX, PsbY, PsbZ, Psb30/Ycf12, at least 3 peripheral proteins of the oxygen-evolving complex and a large number of cofactors. It forms dimeric complexes.

Its subcellular location is the plastid. The protein resides in the chloroplast thylakoid membrane. One of the components of the core complex of photosystem II (PSII). PSII is a light-driven water:plastoquinone oxidoreductase that uses light energy to abstract electrons from H(2)O, generating O(2) and a proton gradient subsequently used for ATP formation. It consists of a core antenna complex that captures photons, and an electron transfer chain that converts photonic excitation into a charge separation. This chain is Photosystem II reaction center protein K, found in Anthoceros angustus (Hornwort).